Reading from the N-terminus, the 225-residue chain is Phosphoribosylformylglycinamidine synthase subunit PurQ (225 aa).

Residues 4 to 225 (RIGVITFPGT…LSVLDTLVTA (222 aa)) form the Glutamine amidotransferase type-1 domain. Cys87 acts as the Nucleophile in catalysis. Catalysis depends on residues His196 and Glu198.

As to quaternary structure, part of the FGAM synthase complex composed of 1 PurL, 1 PurQ and 2 PurS subunits.

It is found in the cytoplasm. It catalyses the reaction N(2)-formyl-N(1)-(5-phospho-beta-D-ribosyl)glycinamide + L-glutamine + ATP + H2O = 2-formamido-N(1)-(5-O-phospho-beta-D-ribosyl)acetamidine + L-glutamate + ADP + phosphate + H(+). It carries out the reaction L-glutamine + H2O = L-glutamate + NH4(+). The protein operates within purine metabolism; IMP biosynthesis via de novo pathway; 5-amino-1-(5-phospho-D-ribosyl)imidazole from N(2)-formyl-N(1)-(5-phospho-D-ribosyl)glycinamide: step 1/2. Its function is as follows. Part of the phosphoribosylformylglycinamidine synthase complex involved in the purines biosynthetic pathway. Catalyzes the ATP-dependent conversion of formylglycinamide ribonucleotide (FGAR) and glutamine to yield formylglycinamidine ribonucleotide (FGAM) and glutamate. The FGAM synthase complex is composed of three subunits. PurQ produces an ammonia molecule by converting glutamine to glutamate. PurL transfers the ammonia molecule to FGAR to form FGAM in an ATP-dependent manner. PurS interacts with PurQ and PurL and is thought to assist in the transfer of the ammonia molecule from PurQ to PurL. In Nocardia farcinica (strain IFM 10152), this protein is Phosphoribosylformylglycinamidine synthase subunit PurQ.